A 388-amino-acid polypeptide reads, in one-letter code: MKKFFTSESVAIGHPDKIADQIADAILDEVLKQDPLARSAIEVTVSTGDVSIFGELSTKAYVNVRDVATDTIKKIGYIEPKLGFTYDSVNVSNKIVEQSAEISSAVDQAEDDPDQIGAGDQGIIYGYANNETSDYIPLALQLSHKLMKQLKTVREAGDSNSYLRPDGKGEVSVEYGDDNRPKRISAVVLSAQHIEGIELEDLRARISEDIIAPVLPTELVDENTKFFINPSGLWSLGGPQADSGLTGRKIIVDTYGGAAHHGGGAFSGKDATKVDRSGAYYARYVAKNLVAAGLADKLEIQVGYAIGVARPVSIDLDTFGTEKVSIDKIYSIVDQVFDFRPLSIINQLDLRRPIYLQTAAFGHFGRSDLDLPWEKLDQVEKIKALLAN.

H14 contacts ATP. Position 16 (D16) interacts with Mg(2+). E42 serves as a coordination point for K(+). Residues E55 and Q98 each contribute to the L-methionine site. A flexible loop region spans residues 98 to 108; that stretch reads QSAEISSAVDQ. Residues 166–168, D242, 248–249, A265, and K269 contribute to the ATP site; these read DGK and RK. D242 serves as a coordination point for L-methionine. L-methionine is bound at residue K273.

The protein belongs to the AdoMet synthase family. In terms of assembly, homotetramer; dimer of dimers. Mg(2+) serves as cofactor. Requires K(+) as cofactor.

It is found in the cytoplasm. It catalyses the reaction L-methionine + ATP + H2O = S-adenosyl-L-methionine + phosphate + diphosphate. Its pathway is amino-acid biosynthesis; S-adenosyl-L-methionine biosynthesis; S-adenosyl-L-methionine from L-methionine: step 1/1. Functionally, catalyzes the formation of S-adenosylmethionine (AdoMet) from methionine and ATP. The overall synthetic reaction is composed of two sequential steps, AdoMet formation and the subsequent tripolyphosphate hydrolysis which occurs prior to release of AdoMet from the enzyme. The chain is S-adenosylmethionine synthase from Oenococcus oeni (strain ATCC BAA-331 / PSU-1).